We begin with the raw amino-acid sequence, 281 residues long: 2-dehydro-3-deoxyphosphooctonate aldolase 1 (281 aa).

This sequence belongs to the KdsA family.

The protein localises to the cytoplasm. The enzyme catalyses D-arabinose 5-phosphate + phosphoenolpyruvate + H2O = 3-deoxy-alpha-D-manno-2-octulosonate-8-phosphate + phosphate. It participates in carbohydrate biosynthesis; 3-deoxy-D-manno-octulosonate biosynthesis; 3-deoxy-D-manno-octulosonate from D-ribulose 5-phosphate: step 2/3. The protein operates within bacterial outer membrane biogenesis; lipopolysaccharide biosynthesis. The polypeptide is 2-dehydro-3-deoxyphosphooctonate aldolase 1 (kdsA1) (Pseudomonas putida (strain ATCC 47054 / DSM 6125 / CFBP 8728 / NCIMB 11950 / KT2440)).